The sequence spans 142 residues: Large ribosomal subunit protein uL13 (142 aa).

This sequence belongs to the universal ribosomal protein uL13 family. In terms of assembly, part of the 50S ribosomal subunit.

Its function is as follows. This protein is one of the early assembly proteins of the 50S ribosomal subunit, although it is not seen to bind rRNA by itself. It is important during the early stages of 50S assembly. This Acinetobacter baumannii (strain AB0057) protein is Large ribosomal subunit protein uL13.